The chain runs to 525 residues: MTENIHKHRILILDFGSQYTQLVARRVRELGVYCELWAWDVTEAQIRDFNPSGIILSGGPESTTEENSPRAPQYVFEAGVPIFGVCYGMQTMAMQLGGHVEASNEREFGYAQVEVVNDSALVRGIEDALTADGKPLLDVWMSHGDKVTAIPSDFVTVASTESCPFAIMANEEKRFYGVQFHPEVTHTRQGMRMLERFVRDICQCEALWTPAKIIDDAVARIREQVGDDKVILGLSGGVDSSVTAMLLHRAIGKNLTCVFVDNGLLRLNEAEQVLDMFGDHFGLNIVHVPAEDRFLSALAGENDPEAKRKIIGRVFVEVFDEEALKLEDVKWLAQGTIYPDVIESAASATGKAHVIKSHHNVGGLPKEMKMGLVEPLKELFKDEVRKIGLELGLPYDMLYRHPFPGPGLGVRVLGEVKKEYCDLLRRADAIFIEELRKADLYDKVSQAFTVFLPVRSVGVMGDGRKYDWVVSLRAVETIDFMTAHWAHLPYDFLGRVSNRIINEVNGISRVVYDISGKPPATIEWE.

The 199-residue stretch at 9–207 folds into the Glutamine amidotransferase type-1 domain; that stretch reads RILILDFGSQ…VRDICQCEAL (199 aa). Cysteine 86 (nucleophile) is an active-site residue. Residues histidine 181 and glutamate 183 contribute to the active site. One can recognise a GMPS ATP-PPase domain in the interval 208–400; the sequence is WTPAKIIDDA…LGLPYDMLYR (193 aa). Residue 235-241 participates in ATP binding; the sequence is SGGVDSS.

As to quaternary structure, homodimer.

The catalysed reaction is XMP + L-glutamine + ATP + H2O = GMP + L-glutamate + AMP + diphosphate + 2 H(+). It functions in the pathway purine metabolism; GMP biosynthesis; GMP from XMP (L-Gln route): step 1/1. Functionally, catalyzes the synthesis of GMP from XMP. The polypeptide is GMP synthase [glutamine-hydrolyzing] (Shigella flexneri).